The primary structure comprises 857 residues: RNA-directed RNA polymerase 2a (857 aa).

Positions 511–624 (KHCLEIDLSK…FSLLPPVGDP (114 aa)) constitute a RdRp catalytic domain. The segment at 782 to 829 (RRCNDKRRTPTGSYGGGEEAETKISQAESTGTRSQKSQRESAFKSQTV) is disordered. Residues 804–816 (KISQAESTGTRSQ) show a composition bias toward polar residues.

The protein belongs to the ssRNA positive-strand viruses RNA-directed RNA polymerase family. In terms of assembly, interacts with replication protein 1a.

The enzyme catalyses RNA(n) + a ribonucleoside 5'-triphosphate = RNA(n+1) + diphosphate. Functionally, RNA-dependent RNA polymerase which replicates the viral genome composed of 3 RNA segments, RNA1, RNA2 and RNA3. The sequence is that of RNA-directed RNA polymerase 2a from Cucumis sativus (Cucumber).